The chain runs to 283 residues: Bifunctional protein FolD (283 aa).

Residues 165–167 (GRS), Ser190, and Val231 each bind NADP(+).

It belongs to the tetrahydrofolate dehydrogenase/cyclohydrolase family. Homodimer.

The enzyme catalyses (6R)-5,10-methylene-5,6,7,8-tetrahydrofolate + NADP(+) = (6R)-5,10-methenyltetrahydrofolate + NADPH. It carries out the reaction (6R)-5,10-methenyltetrahydrofolate + H2O = (6R)-10-formyltetrahydrofolate + H(+). It functions in the pathway one-carbon metabolism; tetrahydrofolate interconversion. In terms of biological role, catalyzes the oxidation of 5,10-methylenetetrahydrofolate to 5,10-methenyltetrahydrofolate and then the hydrolysis of 5,10-methenyltetrahydrofolate to 10-formyltetrahydrofolate. The protein is Bifunctional protein FolD of Anoxybacillus flavithermus (strain DSM 21510 / WK1).